The primary structure comprises 209 residues: Protein ASG7 (209 aa).

The Lumenal portion of the chain corresponds to 1-49 (MTTLASSIEHKTKHLAAPFENDENTWMKKYCCQCKSCKMSVPVQPWLPR). The chain crosses the membrane as a helical span at residues 50–70 (FFVFGILCPVFWLVNLLAWWF). The Cytoplasmic portion of the chain corresponds to 71–184 (LQYWQPHELE…LLRKTFRNWN (114 aa)). 3 positions are modified to phosphoserine: Ser-121, Ser-123, and Ser-125. The residue at position 153 (Thr-153) is a Phosphothreonine. Residues 185–205 (LRSLLGLLIDSILIIFVVLLC) traverse the membrane as a helical segment. The Lumenal segment spans residues 206 to 209 (KKSR).

The protein resides in the endomembrane system. Functionally, required for receptor inhibition of inappropriately expressed a-factor receptor (STE3) in MAT a cells. Inhibits signaling by relocalizing the G protein beta-gamma (STE4-STE18) subunit to intracellular membranes. May also be a mechanism for the down-regulation of the mating pheromone response after the zygotic fusion event, promoting the transition of the new diploid cell to vegetative growth. The protein is Protein ASG7 (ASG7) of Saccharomyces cerevisiae (strain YJM789) (Baker's yeast).